Here is a 1701-residue protein sequence, read N- to C-terminus: DDB1- and CUL4-associated factor homolog 1 (1701 aa).

A compositionally biased stretch (polar residues) spans 224 to 245 (HAEQSTSNGTSIPSIKITSVDG). 3 disordered regions span residues 224 to 269 (HAEQ…RRTE), 883 to 906 (DRPA…GNNF), and 932 to 961 (RPSN…TPTL). Positions 851–883 (NQAELLQLIHDHLLKSKLDSVAAMLKSEAKLPD) constitute a LisH domain. Positions 888-906 (RSINTPILNKPLPSSGNNF) are enriched in polar residues. WD repeat units lie at residues 1086-1125 (DHDE…DEGH), 1128-1169 (CHGS…QRVH), 1171-1210 (YRED…DTYL), and 1215-1252 (GLQY…HVFD). 2 consecutive short sequence motifs (DWD box) follow at residues 1237-1245 (LLWDVRKKN) and 1275-1282 (EVYDIRTF). Disordered regions lie at residues 1384 to 1559 (IGRL…DINL), 1566 to 1585 (EARV…PVDP), and 1641 to 1701 (LVRG…DDEA). 2 stretches are compositionally biased toward acidic residues: residues 1390-1423 (NEDE…DEEI) and 1451-1461 (DDNDTLDDLDF). Residues 1468–1479 (IIRRQAQRRRQR) are compositionally biased toward basic residues. 2 stretches are compositionally biased toward acidic residues: residues 1494–1512 (EGSD…DPDF) and 1520–1543 (DLVD…DDDS). Basic and acidic residues predominate over residues 1567 to 1581 (ARVVENEGNNERPAR). A compositionally biased stretch (acidic residues) spans 1667-1678 (DTDEYQSEEEEI).

It belongs to the VPRBP/DCAF1 family. As to quaternary structure, component of the cul4-rbx1-ddb1-dcaf1 E3 ubiquitin-protein ligase complex.

The protein localises to the nucleus. The protein operates within protein modification; protein ubiquitination. Component of the cul4-rbx1-ddb1-dcaf1 E3 ubiquitin-protein ligase complex, dcaf1 may function as the substrate recognition module within this complex. The chain is DDB1- and CUL4-associated factor homolog 1 (dcaf-1) from Caenorhabditis elegans.